The sequence spans 54 residues: MAGKRDKVRMISSAGTGHFYTTDKNKKNTPGKMEFLKYDPVVRKHVLYKEGKIK.

The protein belongs to the bacterial ribosomal protein bL33 family.

This chain is Large ribosomal subunit protein bL33, found in Stenotrophomonas maltophilia (strain K279a).